Reading from the N-terminus, the 419-residue chain is L-rhamnose isomerase (419 aa).

Residues His262, Asp294, and Asp296 each coordinate Mn(2+).

The protein belongs to the rhamnose isomerase family. As to quaternary structure, homotetramer. Requires Mn(2+) as cofactor.

Its subcellular location is the cytoplasm. The catalysed reaction is L-rhamnopyranose = L-rhamnulose. It functions in the pathway carbohydrate degradation; L-rhamnose degradation; glycerone phosphate from L-rhamnose: step 1/3. Its function is as follows. Catalyzes the interconversion of L-rhamnose and L-rhamnulose. This chain is L-rhamnose isomerase, found in Salmonella gallinarum (strain 287/91 / NCTC 13346).